The primary structure comprises 561 residues: Shugoshin 1 (561 aa).

Positions 1-176 (MAKERCLKKS…DTLGVDFDSG (176 aa)) are necessary for interaction with PPP2CA and PPP2R1A. Positions 7-89 (LKKSFQDSLE…DIILQLRKEC (83 aa)) form a coiled coil. Ser14 carries the post-translational modification Phosphoserine; by NEK2. The short motif at 192–200 (RSSLKKHCN) is the D-box 1 element. Residue Ser256 is modified to Phosphoserine. Disordered stretches follow at residues 260-331 (IQPG…SVSS) and 348-441 (FRQK…HLSL). The segment covering 267-296 (KTKEDILESKSEQTKSKQRDTQERKREEKR) has biased composition (basic and acidic residues). Residues 273–313 (LESKSEQTKSKQRDTQERKREEKRKANRRKSKRMSKYKENK) are a coiled coil. Over residues 297–307 (KANRRKSKRMS) the composition is skewed to basic residues. The span at 308–318 (KYKENKSENKK) shows a compositional bias: basic and acidic residues. The KEN box motif lies at 310 to 312 (KEN). The span at 364 to 375 (SEVSLCESSGSG) shows a compositional bias: low complexity. Over residues 388 to 398 (YIQNPTSNSDR) the composition is skewed to polar residues. Basic and acidic residues predominate over residues 410-421 (KYTDEKETEGSK). A compositionally biased stretch (low complexity) spans 422 to 433 (PTKTPTTTPPET). A Phosphoserine modification is found at Ser436. Residues 438–446 (HLSLKDITN) carry the D-box 2 motif. Positions 451-455 (PVVKI) match the PXVXL/I motif motif. A D-box 3 motif is present at residues 457–465 (RLSLSPKKN). Phosphoserine; by NEK2 is present on Ser507.

This sequence belongs to the shugoshin family. As to quaternary structure, interacts with PPP2CA (or PPP2CB), PPP2R1B, PPP2R5A, PPP2R5B, PPP2R5C, PPP2R5D, PPP2R5E, SET, LRRC59, RBM10 (or RBM5), RPL10A, RPL28, RPL7, RPL7A and RPLP1. Interaction with protein phosphatase 2A occurs most probably through direct binding to the regulatory B56 subunits: PPP2R1B, PPP2R5A, PPP2R5B, PPP2R5C, PPP2R5D, PPP2R5E. Interacts with PPP2R1A and NEK2. Isoform 3 interacts with PLK1. Interacts with CDCA8. Post-translationally, ubiquitinated and degraded during mitotic exit by APC/C-Cdh1. Phosphorylation by NEK2 is essential for chromosome congression in mitosis and for the proper attachment of spindle microtubule to the kinetochore. Phosphorylated by PLK1 and AUKRB. As to expression, widely expressed. Highly expressed in testis. Expressed in lung, small intestine, breast, liver and placenta. Strongly overexpressed in 90% of breast cancers tested.

The protein localises to the nucleus. It localises to the chromosome. Its subcellular location is the centromere. It is found in the kinetochore. The protein resides in the cytoplasm. The protein localises to the cytoskeleton. It localises to the spindle pole. Its subcellular location is the microtubule organizing center. It is found in the centrosome. The protein resides in the nucleus speckle. In terms of biological role, plays a central role in chromosome cohesion during mitosis by preventing premature dissociation of cohesin complex from centromeres after prophase, when most of cohesin complex dissociates from chromosomes arms. May act by preventing phosphorylation of the STAG2 subunit of cohesin complex at the centromere, ensuring cohesin persistence at centromere until cohesin cleavage by ESPL1/separase at anaphase. Essential for proper chromosome segregation during mitosis and this function requires interaction with PPP2R1A. Its phosphorylated form is necessary for chromosome congression and for the proper attachment of spindle microtubule to the kinetochore. Necessary for kinetochore localization of PLK1 and CENPF. May play a role in the tension sensing mechanism of the spindle-assembly checkpoint by regulating PLK1 kinetochore affinity. Isoform 3 plays a role in maintaining centriole cohesion involved in controlling spindle pole integrity. Involved in centromeric enrichment of AUKRB in prometaphase. This chain is Shugoshin 1, found in Homo sapiens (Human).